The primary structure comprises 116 residues: Large-conductance mechanosensitive channel (116 aa).

Transmembrane regions (helical) follow at residues 7–27 (EFAL…GAAF) and 64–84 (GLFI…FIFV).

It belongs to the MscL family. Homopentamer.

It localises to the cell membrane. In terms of biological role, channel that opens in response to stretch forces in the membrane lipid bilayer. May participate in the regulation of osmotic pressure changes within the cell. The polypeptide is Large-conductance mechanosensitive channel (Staphylococcus epidermidis (strain ATCC 35984 / DSM 28319 / BCRC 17069 / CCUG 31568 / BM 3577 / RP62A)).